The primary structure comprises 159 residues: 2-C-methyl-D-erythritol 2,4-cyclodiphosphate synthase (159 aa).

Positions 10 and 12 each coordinate a divalent metal cation. 4-CDP-2-C-methyl-D-erythritol 2-phosphate-binding positions include 10-12 (DVH) and 36-37 (HS). His-44 contacts a divalent metal cation. Residues 58–60 (DIG), 63–67 (FPDTD), 102–108 (AQAPKMA), 134–137 (TTTE), Phe-141, and Arg-144 each bind 4-CDP-2-C-methyl-D-erythritol 2-phosphate.

This sequence belongs to the IspF family. As to quaternary structure, homotrimer. It depends on a divalent metal cation as a cofactor.

It catalyses the reaction 4-CDP-2-C-methyl-D-erythritol 2-phosphate = 2-C-methyl-D-erythritol 2,4-cyclic diphosphate + CMP. It participates in isoprenoid biosynthesis; isopentenyl diphosphate biosynthesis via DXP pathway; isopentenyl diphosphate from 1-deoxy-D-xylulose 5-phosphate: step 4/6. Involved in the biosynthesis of isopentenyl diphosphate (IPP) and dimethylallyl diphosphate (DMAPP), two major building blocks of isoprenoid compounds. Catalyzes the conversion of 4-diphosphocytidyl-2-C-methyl-D-erythritol 2-phosphate (CDP-ME2P) to 2-C-methyl-D-erythritol 2,4-cyclodiphosphate (ME-CPP) with a corresponding release of cytidine 5-monophosphate (CMP). The protein is 2-C-methyl-D-erythritol 2,4-cyclodiphosphate synthase of Shewanella sp. (strain ANA-3).